A 384-amino-acid chain; its full sequence is Gastrin-releasing peptide receptor (384 aa).

Topologically, residues 1-38 (MALNDCFLLNLEVDHFMHCNISSHSADLPVNDDWSHPG) are extracellular. The N-linked (GlcNAc...) asparagine glycan is linked to Asn20. Residues 39–62 (ILYVIPAVYGVIILIGLIGNITLI) form a helical membrane-spanning segment. At 63-76 (KIFCTVKSMRNVPN) the chain is on the cytoplasmic side. A helical membrane pass occupies residues 77 to 96 (LFISSLALGDLLLLITCAPV). Topologically, residues 97-114 (DASRYLADRWLFGRIGCK) are extracellular. Cysteines 113 and 196 form a disulfide. The helical transmembrane segment at 115–136 (LIPFIQLTSVGVSVFTLTALSA) threads the bilayer. Residues 137-152 (DRYKAIVRPMDIQASH) are Cytoplasmic-facing. A helical transmembrane segment spans residues 153–174 (ALMKICLKAAFIWIISMLLAIP). The Extracellular segment spans residues 175 to 208 (EAVFSDLHPFHEESTNQTFISCAPYPHSNELHPK). Residues 209 to 234 (IHSMASFLVFYVIPLSIISVYYYFIA) traverse the membrane as a helical segment. Over 235-264 (KNLIQSAYNLPVEGNIHVKKQIESRKRLAK) the chain is Cytoplasmic. Residues 265–285 (TVLVFVGLFAFCWLPNHVIYL) form a helical membrane-spanning segment. Over 286 to 298 (YRSYHYSEVDTSM) the chain is Extracellular. Residues 299 to 325 (LHFVTSICARLLAFTNSCVNPFALYLL) traverse the membrane as a helical segment. The Cytoplasmic portion of the chain corresponds to 326–384 (SKSFRKQFNTQLLCCQPGLIIRSHSTGRSTTCMTSLKSTNPSVATFSLINGNICHERYV). The S-palmitoyl cysteine moiety is linked to residue Cys339. Ser350 carries the phosphoserine modification.

It belongs to the G-protein coupled receptor 1 family. As to expression, highly expressed in pancreas. Also expressed in stomach, adrenal cortex and brain. In brain, expressed in cells throughout the cortex.

The protein localises to the cell membrane. Functionally, receptor for gastrin-releasing peptide (GRP). Signals via association with G proteins that activate a phosphatidylinositol-calcium second messenger system, resulting in Akt phosphorylation. Contributes to the regulation of food intake. Contributes to the perception of prurient stimuli and transmission of itch signals in the spinal cord that promote scratching behavior, but does not play a role in the perception of pain. Contributes primarily to nonhistaminergic itch sensation. In one study, shown to act in the amygdala as part of an inhibitory network which inhibits memory specifically related to learned fear. In another study, shown to contribute to disinhibition of glutamatergic cells in the auditory cortex via signaling on vasoactive intestinal peptide-expressing cells which leads to enhanced auditory fear memories. Contributes to the induction of sighing through signaling in the pre-Botzinger complex, a cluster of several thousand neurons in the ventrolateral medulla responsible for inspiration during respiratory activity. The protein is Gastrin-releasing peptide receptor (GRPR) of Homo sapiens (Human).